A 132-amino-acid polypeptide reads, in one-letter code: MSLYLYIALGGALGSVGRFALSGLVAQHYGETFPWGTLVVNVVGSFIIGFFATLTAPEGRMLVGATGRHFVMTGVLGGFTTFSSFSLQTLNLLRDGDWGRAGGNVVGSLVLCLVAVWLGHIAAVGLNSLKGS.

4 consecutive transmembrane segments (helical) span residues 5-25 (LYIA…SGLV), 32-52 (TFPW…GFFA), 70-90 (FVMT…LQTL), and 105-125 (VVGS…AAVG). 2 residues coordinate Na(+): glycine 77 and threonine 80.

Belongs to the fluoride channel Fluc/FEX (TC 1.A.43) family.

Its subcellular location is the cell inner membrane. It carries out the reaction fluoride(in) = fluoride(out). Na(+) is not transported, but it plays an essential structural role and its presence is essential for fluoride channel function. In terms of biological role, fluoride-specific ion channel. Important for reducing fluoride concentration in the cell, thus reducing its toxicity. This Opitutus terrae (strain DSM 11246 / JCM 15787 / PB90-1) protein is Fluoride-specific ion channel FluC.